A 248-amino-acid chain; its full sequence is 2,3-bisphosphoglycerate-dependent phosphoglycerate mutase (248 aa).

Substrate is bound by residues 8-15 (RHGESTWN), 21-22 (TG), R60, 87-90 (ERHY), K98, 114-115 (RR), and 183-184 (GN). The active-site Tele-phosphohistidine intermediate is the H9. The active-site Proton donor/acceptor is the E87.

The protein belongs to the phosphoglycerate mutase family. BPG-dependent PGAM subfamily.

It catalyses the reaction (2R)-2-phosphoglycerate = (2R)-3-phosphoglycerate. It functions in the pathway carbohydrate degradation; glycolysis; pyruvate from D-glyceraldehyde 3-phosphate: step 3/5. Its function is as follows. Catalyzes the interconversion of 2-phosphoglycerate and 3-phosphoglycerate. This Solibacter usitatus (strain Ellin6076) protein is 2,3-bisphosphoglycerate-dependent phosphoglycerate mutase.